The following is a 214-amino-acid chain: Orotate phosphoribosyltransferase (214 aa).

Lys26 is a binding site for 5-phospho-alpha-D-ribose 1-diphosphate. Residue 34–35 (FF) participates in orotate binding. Residues 72 to 73 (YK), Arg99, Lys100, Lys103, His105, and 124 to 132 (DDVITAGTA) each bind 5-phospho-alpha-D-ribose 1-diphosphate. Orotate contacts are provided by Thr128 and Arg157.

The protein belongs to the purine/pyrimidine phosphoribosyltransferase family. PyrE subfamily. As to quaternary structure, homodimer. It depends on Mg(2+) as a cofactor.

The enzyme catalyses orotidine 5'-phosphate + diphosphate = orotate + 5-phospho-alpha-D-ribose 1-diphosphate. Its pathway is pyrimidine metabolism; UMP biosynthesis via de novo pathway; UMP from orotate: step 1/2. Functionally, catalyzes the transfer of a ribosyl phosphate group from 5-phosphoribose 1-diphosphate to orotate, leading to the formation of orotidine monophosphate (OMP). The sequence is that of Orotate phosphoribosyltransferase from Pseudomonas fluorescens (strain ATCC BAA-477 / NRRL B-23932 / Pf-5).